An 816-amino-acid chain; its full sequence is Phosphatidylinositol 4-kinase beta (816 aa).

Disordered stretches follow at residues M1–S28, P93–R120, and H249–S318. G2 is modified (N-acetylglycine). Residues G2–S68 form an interaction with ACBD3 region. Residues Q49–S242 enclose the PIK helical domain. S258 is subject to Phosphoserine. Position 263 is a phosphothreonine (T263). Phosphoserine is present on residues S266, S275, S277, S284, S294, S428, and S511. Over residues D278 to S294 the composition is skewed to low complexity. Phosphothreonine occurs at positions 517 and 519. Positions E535 to T801 constitute a PI3K/PI4K catalytic domain. Residues V541 to G547 form a G-loop region. Positions Q668–N676 are catalytic loop. Residues H687–T711 are activation loop.

It belongs to the PI3/PI4-kinase family. Type III PI4K subfamily. Interacts with ARF1 and ARF3 in the Golgi complex, but not with ARF4, ARF5 or ARF6. Interacts with NCS1/FREQ in a calcium-independent manner. Interacts with CALN1/CABP8 and CALN2/CABP7; in a calcium-dependent manner; this interaction competes with NCS1/FREQ binding. Interacts with ACBD3. Interacts with ARMH3, YWHAB, YWHAE, YWHAG, YWHAH, YWHAQ, YWHAZ and SFN. Interacts with GGA2 (via VHS domain); the interaction is important for PI4KB location at the Golgi apparatus membrane. Interacts with ATG9A. Requires Mg(2+) as cofactor. Mn(2+) serves as cofactor.

The protein resides in the endomembrane system. Its subcellular location is the mitochondrion outer membrane. The protein localises to the rough endoplasmic reticulum membrane. It localises to the golgi apparatus. It is found in the golgi apparatus membrane. It carries out the reaction a 1,2-diacyl-sn-glycero-3-phospho-(1D-myo-inositol) + ATP = a 1,2-diacyl-sn-glycero-3-phospho-(1D-myo-inositol 4-phosphate) + ADP + H(+). Its activity is regulated as follows. Inhibited by wortmannin. Increased kinase activity upon interaction with NCS1/FREQ. Phosphorylates phosphatidylinositol (PI) in the first committed step in the production of the second messenger inositol-1,4,5,-trisphosphate (PIP). May regulate Golgi disintegration/reorganization during mitosis, possibly via its phosphorylation. Involved in Golgi-to-plasma membrane trafficking. May play an important role in the inner ear development. This chain is Phosphatidylinositol 4-kinase beta (PI4KB), found in Rhinolophus ferrumequinum (Greater horseshoe bat).